The following is a 308-amino-acid chain: Eukaryotic translation initiation factor 3 subunit G-A (308 aa).

Disordered regions lie at residues 1–35 (MPTG…KPDP) and 177–226 (TGDK…ADDN). Over residues 185–194 (GAEPEPAQAP) the composition is skewed to low complexity. Residues 209–226 (GGSRRGESMQPNRRADDN) are compositionally biased toward basic and acidic residues. One can recognise an RRM domain in the interval 227-305 (ATIRVTNLSE…LILNVEWAKP (79 aa)).

This sequence belongs to the eIF-3 subunit G family. Component of the eukaryotic translation initiation factor 3 (eIF-3) complex, which is composed of 13 subunits: eif3a, eif3b, eif3c, eif3d, eif3e, eif3f, eif3g, eif3h, eif3i, eif3j, eif3k, eif3l and eif3m.

It localises to the cytoplasm. In terms of biological role, RNA-binding component of the eukaryotic translation initiation factor 3 (eIF-3) complex, which is involved in protein synthesis of a specialized repertoire of mRNAs and, together with other initiation factors, stimulates binding of mRNA and methionyl-tRNAi to the 40S ribosome. The eIF-3 complex specifically targets and initiates translation of a subset of mRNAs involved in cell proliferation. This subunit can bind 18S rRNA. In Xenopus laevis (African clawed frog), this protein is Eukaryotic translation initiation factor 3 subunit G-A (eif3g-a).